Here is a 670-residue protein sequence, read N- to C-terminus: NADH-ubiquinone oxidoreductase chain 5 (670 aa).

Transmembrane regions (helical) follow at residues 1–21 (MYIV…IFGH), 31–51 (IAVG…YEIL), 81–101 (LTSI…LYSM), 111–131 (TRFF…VTAD), 133–153 (FVQL…LINF), 178–198 (LFFG…SVIF), 211–231 (LLGY…IGVV), 251–271 (TPVS…FLVL), 283–303 (ILNI…TIGI), 311–331 (VIAY…GLLN), 339–359 (LTTH…VIHG), 375–395 (LMPL…GFPF), 421–441 (AIIG…LLIL), 462–482 (TNMV…GYVT), 519–539 (LLPL…YFNI), 566–586 (FDFL…YDVM), 594–614 (LWEK…FTAL), 629–649 (IVQT…TGFI), and 650–670 (YMEL…IKID).

Belongs to the complex I subunit 5 family.

The protein localises to the mitochondrion inner membrane. The catalysed reaction is a ubiquinone + NADH + 5 H(+)(in) = a ubiquinol + NAD(+) + 4 H(+)(out). Functionally, core subunit of the mitochondrial membrane respiratory chain NADH dehydrogenase (Complex I) that is believed to belong to the minimal assembly required for catalysis. Complex I functions in the transfer of electrons from NADH to the respiratory chain. The immediate electron acceptor for the enzyme is believed to be ubiquinone. This chain is NADH-ubiquinone oxidoreductase chain 5 (nad5), found in Dictyostelium discoideum (Social amoeba).